Here is a 477-residue protein sequence, read N- to C-terminus: Nuclear receptor subfamily 6 group A member 1-A (477 aa).

Positions 40-115 (QRSCLICGDR…MGMNRKAIRE (76 aa)) form a DNA-binding region, nuclear receptor. NR C4-type zinc fingers lie at residues 43 to 63 (CLICGDRATGLHYGIISCEGC) and 79 to 98 (CSRDKNCEMSRKQRNRCQYC). The tract at residues 147 to 187 (DEANMPEHTWGNNGDSDHSSPGNGVSDGNQPSPVSTLSSNR) is disordered. Polar residues predominate over residues 156-187 (WGNNGDSDHSSPGNGVSDGNQPSPVSTLSSNR). The NR LBD domain maps to 230-461 (QSHTLIGQLV…HSCKSSLSSY (232 aa)).

This sequence belongs to the nuclear hormone receptor family. NR6 subfamily. As to quaternary structure, homodimer. Expressed in germ cells, being predominant in previtellogenic oocytes in the ovary and in spermatocytes in the testis.

It localises to the nucleus. Functionally, probable orphan nuclear receptor. Binds to a response element containing repeats of the motif 5'-AGGTCA-3'. The polypeptide is Nuclear receptor subfamily 6 group A member 1-A (Danio rerio (Zebrafish)).